Consider the following 251-residue polypeptide: Probable transcriptional regulatory protein Cgl1663/cg1872 (251 aa).

The segment at 1 to 22 (MSGHSKWATTKHKKAANDAKRG) is disordered.

The protein belongs to the TACO1 family.

The protein localises to the cytoplasm. This is Probable transcriptional regulatory protein Cgl1663/cg1872 from Corynebacterium glutamicum (strain ATCC 13032 / DSM 20300 / JCM 1318 / BCRC 11384 / CCUG 27702 / LMG 3730 / NBRC 12168 / NCIMB 10025 / NRRL B-2784 / 534).